Consider the following 247-residue polypeptide: Large ribosomal subunit protein uL3 (247 aa).

Disordered regions lie at residues 140–164 (SHRS…KMPG) and 212–247 (LPKE…KEGA). At Gln-151 the chain carries N5-methylglutamine. Over residues 232–247 (DEDKAPADTPAEKEGA) the composition is skewed to basic and acidic residues.

Belongs to the universal ribosomal protein uL3 family. As to quaternary structure, part of the 50S ribosomal subunit. Forms a cluster with proteins L14 and L19. Post-translationally, methylated by PrmB.

Its function is as follows. One of the primary rRNA binding proteins, it binds directly near the 3'-end of the 23S rRNA, where it nucleates assembly of the 50S subunit. This is Large ribosomal subunit protein uL3 from Nitrobacter winogradskyi (strain ATCC 25391 / DSM 10237 / CIP 104748 / NCIMB 11846 / Nb-255).